The sequence spans 362 residues: UDP-N-acetylglucosamine--N-acetylmuramyl-(pentapeptide) pyrophosphoryl-undecaprenol N-acetylglucosamine transferase (362 aa).

UDP-N-acetyl-alpha-D-glucosamine-binding positions include 10–12 (TAG), Asn-124, Arg-161, Ser-195, and Gln-291.

This sequence belongs to the glycosyltransferase 28 family. MurG subfamily.

It localises to the cell membrane. It carries out the reaction di-trans,octa-cis-undecaprenyl diphospho-N-acetyl-alpha-D-muramoyl-L-alanyl-D-glutamyl-meso-2,6-diaminopimeloyl-D-alanyl-D-alanine + UDP-N-acetyl-alpha-D-glucosamine = di-trans,octa-cis-undecaprenyl diphospho-[N-acetyl-alpha-D-glucosaminyl-(1-&gt;4)]-N-acetyl-alpha-D-muramoyl-L-alanyl-D-glutamyl-meso-2,6-diaminopimeloyl-D-alanyl-D-alanine + UDP + H(+). It functions in the pathway cell wall biogenesis; peptidoglycan biosynthesis. Cell wall formation. Catalyzes the transfer of a GlcNAc subunit on undecaprenyl-pyrophosphoryl-MurNAc-pentapeptide (lipid intermediate I) to form undecaprenyl-pyrophosphoryl-MurNAc-(pentapeptide)GlcNAc (lipid intermediate II). This is UDP-N-acetylglucosamine--N-acetylmuramyl-(pentapeptide) pyrophosphoryl-undecaprenol N-acetylglucosamine transferase from Streptomyces collinus.